The chain runs to 380 residues: Cytochrome b (380 aa).

The next 4 helical transmembrane spans lie at 34–54 (FGSL…FLAM), 78–99 (WLLR…YFHI), 114–134 (WNIG…GYVL), and 179–199 (FFTF…IHLL). Heme b contacts are provided by His84 and His98. The heme b site is built by His183 and His197. An a ubiquinone-binding site is contributed by His202. The next 4 membrane-spanning stretches (helical) occupy residues 227–247 (YKDL…STFA), 289–309 (LGGV…PIIH), 321–341 (IAKT…WIGG), and 348–368 (FITI…LLIP).

It belongs to the cytochrome b family. As to quaternary structure, the cytochrome bc1 complex contains 3 respiratory subunits (MT-CYB, CYC1 and UQCRFS1), 2 core proteins (UQCRC1 and UQCRC2) and probably 6 low-molecular weight proteins. It depends on heme b as a cofactor.

The protein resides in the mitochondrion inner membrane. Its function is as follows. Component of the ubiquinol-cytochrome c reductase complex (complex III or cytochrome b-c1 complex) that is part of the mitochondrial respiratory chain. The b-c1 complex mediates electron transfer from ubiquinol to cytochrome c. Contributes to the generation of a proton gradient across the mitochondrial membrane that is then used for ATP synthesis. The sequence is that of Cytochrome b (mt-cyb) from Pelophylax nigromaculatus (Black-spotted frog).